The chain runs to 638 residues: RNA exonuclease 3 (638 aa).

Residues 37–136 (AQDQVLEQKE…PPRRAPKEAL (100 aa)) form a disordered region. Positions 55 to 76 (LKLEPRPEAKETPKDDLRHVSD) are enriched in basic and acidic residues. The segment covering 77 to 111 (SGRSTPVKKTTAPATNAENISPVSRQPNIPKNTAT) has biased composition (polar residues). In terms of domain architecture, Exonuclease spans 408-584 (ICFDCEMGYT…VEDALATGDL (177 aa)). Polar residues predominate over residues 612-622 (DSSSNTVSMQT). The interval 612 to 638 (DSSSNTVSMQTKLGEGAGAKRAREGTS) is disordered.

It belongs to the REXO1/REXO3 family.

The protein resides in the cytoplasm. The protein localises to the nucleus. Functionally, 3' to 5' exoribonuclease required for proper 3' end maturation of MRP RNA and of the U5L snRNA. This Emericella nidulans (strain FGSC A4 / ATCC 38163 / CBS 112.46 / NRRL 194 / M139) (Aspergillus nidulans) protein is RNA exonuclease 3 (rex3).